A 366-amino-acid polypeptide reads, in one-letter code: MEGQRVEVDGGIMEGGGQILRVSTALSCLLGLPLRVQKIRAGRSTPGLRPQHLSGLEMVRDLCGGHLEGAEIGSTEITFTPEKIRGGVHTADTKTAGSVCLLMQVSMPCVLFAASPSELRLKGGTNAEMAPQIDYTMMVFKPIAEKFGFTFNCDIKTRGYYPKGGGEVIVRVSPVKRLDPINLTDRGSVTKIYGRAFVAGVLPLKVAKDMAAAAVRCIRKEIRDLYVSIQPVQEARDQAFGNGSGIIIVAETSTGCLFAGSSLGKRGVNADKVGIEAAEMLLANLRHGGTVDEYLQDQLIIFMALANGISRIKTGSVTLHTQTAIHFAEQLAKAKFTVKKSEEEEDATKDTYVIECEGIGMANPHL.

The ATP site is built by Gln-104, Pro-131, Tyr-294, Asp-297, Gln-298, and His-320. The active-site Tele-AMP-histidine intermediate is the His-320.

This sequence belongs to the RNA 3'-terminal cyclase family. Type 1 subfamily. As to expression, detected in retinal ganglion cells (RGCs) (at protein level).

Its subcellular location is the nucleus. The protein localises to the nucleoplasm. The enzyme catalyses a 3'-end 3'-phospho-ribonucleotide-RNA + ATP = a 3'-end 2',3'-cyclophospho-ribonucleotide-RNA + AMP + diphosphate. Its function is as follows. Catalyzes the conversion of 3'-phosphate to a 2',3'-cyclic phosphodiester at the end of RNA. The mechanism of action of the enzyme occurs in 3 steps: (A) adenylation of the enzyme by ATP; (B) transfer of adenylate to an RNA-N3'P to produce RNA-N3'PP5'A; (C) and attack of the adjacent 2'-hydroxyl on the 3'-phosphorus in the diester linkage to produce the cyclic end product. Likely functions in some aspects of cellular RNA processing. Function plays an important role in regulating axon regeneration by inhibiting central nervous system (CNS) axon regeneration following optic nerve injury. The protein is RNA 3'-terminal phosphate cyclase of Mus musculus (Mouse).